The primary structure comprises 323 residues: Mycothiol acetyltransferase (323 aa).

N-acetyltransferase domains follow at residues 21–176 (ELLR…VSLR) and 173–323 (VSLR…LTKN). A 1D-myo-inositol 2-(L-cysteinylamino)-2-deoxy-alpha-D-glucopyranoside-binding site is contributed by Glu44. 98-100 (LAV) provides a ligand contact to acetyl-CoA. 1D-myo-inositol 2-(L-cysteinylamino)-2-deoxy-alpha-D-glucopyranoside is bound by residues Glu200, Lys240, and Glu253. Acetyl-CoA-binding positions include 257-259 (VGV) and 264-270 (QGLGLGK). 1D-myo-inositol 2-(L-cysteinylamino)-2-deoxy-alpha-D-glucopyranoside is bound at residue Tyr291.

The protein belongs to the acetyltransferase family. MshD subfamily. As to quaternary structure, monomer.

It carries out the reaction 1D-myo-inositol 2-(L-cysteinylamino)-2-deoxy-alpha-D-glucopyranoside + acetyl-CoA = mycothiol + CoA + H(+). In terms of biological role, catalyzes the transfer of acetyl from acetyl-CoA to desacetylmycothiol (Cys-GlcN-Ins) to form mycothiol. The chain is Mycothiol acetyltransferase from Paenarthrobacter aurescens (strain TC1).